Consider the following 218-residue polypeptide: Hypoxanthine-guanine phosphoribosyltransferase (218 aa).

Position 2 is an N-acetylalanine (Ala-2). Position 69 (Lys-69) interacts with GMP. The residue at position 103 (Lys-103) is an N6-acetyllysine. Lys-115 participates in a covalent cross-link: Glycyl lysine isopeptide (Lys-Gly) (interchain with G-Cter in SUMO1); alternate. Residue Lys-115 forms a Glycyl lysine isopeptide (Lys-Gly) (interchain with G-Cter in SUMO2); alternate linkage. GMP is bound by residues 134 to 142 (EDIIDTGKT), Lys-166, 186 to 188 (KFV), and Asp-194. Residue Asp-138 is the Proton acceptor of the active site. Position 142 is a phosphothreonine (Thr-142). Asp-194 contacts Mg(2+).

This sequence belongs to the purine/pyrimidine phosphoribosyltransferase family. Homotetramer. Mg(2+) serves as cofactor.

Its subcellular location is the cytoplasm. The enzyme catalyses IMP + diphosphate = hypoxanthine + 5-phospho-alpha-D-ribose 1-diphosphate. It catalyses the reaction GMP + diphosphate = guanine + 5-phospho-alpha-D-ribose 1-diphosphate. Its pathway is purine metabolism; IMP biosynthesis via salvage pathway; IMP from hypoxanthine: step 1/1. Converts guanine to guanosine monophosphate, and hypoxanthine to inosine monophosphate. Transfers the 5-phosphoribosyl group from 5-phosphoribosylpyrophosphate onto the purine. Plays a central role in the generation of purine nucleotides through the purine salvage pathway. The polypeptide is Hypoxanthine-guanine phosphoribosyltransferase (HPRT1) (Canis lupus familiaris (Dog)).